A 183-amino-acid chain; its full sequence is Oligoribonuclease (183 aa).

The Exonuclease domain occupies 8–171 (LIWIDLEMTG…DDIRDSIHEL (164 aa)). Tyrosine 129 is a catalytic residue.

Belongs to the oligoribonuclease family.

It localises to the cytoplasm. 3'-to-5' exoribonuclease specific for small oligoribonucleotides. The polypeptide is Oligoribonuclease (Halorhodospira halophila (strain DSM 244 / SL1) (Ectothiorhodospira halophila (strain DSM 244 / SL1))).